Reading from the N-terminus, the 434-residue chain is Gamma-enolase (434 aa).

Substrate-binding residues include histidine 158 and glutamate 167. Glutamate 210 serves as the catalytic Proton donor. Residues aspartate 245, glutamate 293, and aspartate 318 each coordinate Mg(2+). Positions 293 and 318 each coordinate substrate. Lysine 343 acts as the Proton acceptor in catalysis. Residues 370–373 and lysine 394 contribute to the substrate site; that span reads SHRS.

The protein belongs to the enolase family. As to quaternary structure, homodimer. Requires Mg(2+) as cofactor. In terms of tissue distribution, expressed in the brain and, to much less but significant extents, in the pituitary and adrenal glands.

The protein resides in the cytoplasm. The enzyme catalyses (2R)-2-phosphoglycerate = phosphoenolpyruvate + H2O. The protein operates within carbohydrate degradation; glycolysis; pyruvate from D-glyceraldehyde 3-phosphate: step 4/5. The protein is Gamma-enolase (ENO2) of Gallus gallus (Chicken).